Here is a 60-residue protein sequence, read N- to C-terminus: UPF0434 protein CKO_02153 (60 aa).

It belongs to the UPF0434 family.

This Citrobacter koseri (strain ATCC BAA-895 / CDC 4225-83 / SGSC4696) protein is UPF0434 protein CKO_02153.